Reading from the N-terminus, the 218-residue chain is MTQDEMKKAAGWAALKYVEKGSIVGVGTGSTVNHFIDALGTMSEEIKGAVSSSVASTEKLEALGIKIFDCNEVASLDIYVDGADEINADREMIKGGGAALTREKIVAAIADKFICIVDGTKAVDVLGTFPLPVEVIPMARSYVARQLVKLGGDPCYREGVITDNGNVILDVYGMKITNPKQLEDQINGIPGVVTVGLFAHRGADVVITGTPEGAKIEE.

Substrate is bound by residues 28–31 (TGST), 81–84 (DGAD), and 94–97 (KGGG). The active-site Proton acceptor is Glu-103. Position 121 (Lys-121) interacts with substrate.

Belongs to the ribose 5-phosphate isomerase family. Homodimer.

The enzyme catalyses aldehydo-D-ribose 5-phosphate = D-ribulose 5-phosphate. Its pathway is carbohydrate degradation; pentose phosphate pathway; D-ribose 5-phosphate from D-ribulose 5-phosphate (non-oxidative stage): step 1/1. Catalyzes the reversible conversion of ribose-5-phosphate to ribulose 5-phosphate. The protein is Ribose-5-phosphate isomerase A of Vibrio vulnificus (strain CMCP6).